The primary structure comprises 469 residues: Protein RUFY3 (469 aa).

A phosphothreonine mark is found at threonine 5 and threonine 12. Phosphoserine occurs at positions 34 and 49. A Phosphothreonine modification is found at threonine 51. The RUN domain maps to 95-227 (DSDYAPLQQF…IDANFCMKGE (133 aa)). 2 coiled-coil regions span residues 271–362 (NRHL…VEKE) and 422–463 (KSEL…AANK).

As to quaternary structure, interacts with PAK1. Interacts (via C-terminus) with Ras-related Rab-5 proteins. Interacts (via C-terminus) with Ras-related Rap-2 proteins. Interacts with PIK3CA and PIK3R1. Interacts (via N-terminus) with FSCN1; this interaction induces neuron axon development. Interacts with DBN1. Interacts (via the second coiled coil) with GTP-, but not GDP-bound ARL8A and ARL8B. Interacts with dynactin/DCTN1 and the dynein intermediate chain DYNC1I1/2. Directly interacts with DYNC1LI1. Post-translationally, phosphorylated by PAK1. Isoform 1 is partially phosphorylated. Overexpressed in gastric cancer cells and tissues (at protein level).

The protein resides in the cytoplasm. It is found in the endomembrane system. It localises to the cell projection. Its subcellular location is the invadopodium. The protein localises to the perikaryon. The protein resides in the growth cone. It is found in the filopodium. It localises to the lamellipodium. Its subcellular location is the lysosome. Its function is as follows. ARL8 effector that promotes the coupling of endolysosomes to dynein-dynactin for retrograde transport along microtubules. Acts by binding both GTP-bound ARL8 and dynein-dynactin. In nonneuronal cells, promotes concentration of endolysosomes in the juxtanuclear area. In hippocampal neurons, drives retrograde transport of endolysosomes from the axon to the soma. Plays a role in the generation of neuronal polarity formation and axon growth. Implicated in the formation of a single axon by developing neurons. May inhibit the formation of additional axons by inhibition of PI3K in minor neuronal processes. Plays a role in the formation of F-actin-enriched protrusive structures at the cell periphery. Plays a role in cytoskeletal organization by regulating the subcellular localization of FSCN1 and DBN1 at axonal growth cones. The polypeptide is Protein RUFY3 (Homo sapiens (Human)).